The sequence spans 384 residues: BarH-like 2 homeobox protein (384 aa).

3 disordered regions span residues M1–T134, C154–A235, and P364–R384. 2 stretches are compositionally biased toward low complexity: residues V101–P110 and Q119–T134. Residues Y157–A175 show a composition bias toward polar residues. The segment covering E177–S217 has biased composition (basic and acidic residues). A DNA-binding region (homeobox) is located at residues P229–T288.

This sequence belongs to the BAR homeobox family.

It localises to the nucleus. Potential regulator of neural basic helix-loop-helix genes. It may down-regulate expression of ASCL1 and, within the thalamus, up-regulate NGN2, thereby regulating distinct patterns of neuronal differentiation. The protein is BarH-like 2 homeobox protein (Barhl2) of Mus musculus (Mouse).